Reading from the N-terminus, the 312-residue chain is MMSVLVKEVIEKLRLDIVYGEPELLEKEINTADITRPGLEMTGYFDYYTPERIQLLGMKEWSYLISMPSNSRYEVLKKMFLPETPAVIVARGLVVPEEMLKAARECKIAILTSRAATSRLSGELSSYLDSRLAERTSVHGVLMDIYGMGVLIQGDSGIGKSETGLELVKRGHRLVADDRVDIFAKDEITLWGEPAEILKHLIEIRGVGIIDVMSLYGASAVKDSSQVQLAVYLENYDTHKTFDRLGNNAEELEVSGVAIPRIRIPVKTGRNISVVIEAAAMNYRAKEMGFDATRLFDERLTSLIARNEVQNA.

Residues H139 and K160 contribute to the active site. An ATP-binding site is contributed by 154-161 (GDSGIGKS). S161 contacts Mg(2+). Catalysis depends on D178, which acts as the Proton acceptor; for phosphorylation activity. Proton donor; for dephosphorylation activity. The tract at residues 202–211 (IEIRGVGIID) is important for the catalytic mechanism of both phosphorylation and dephosphorylation. Residue E203 coordinates Mg(2+). The active site involves R244. An important for the catalytic mechanism of dephosphorylation region spans residues 265–270 (PVKTGR).

Belongs to the HPrK/P family. Homohexamer. Requires Mg(2+) as cofactor.

The enzyme catalyses [HPr protein]-L-serine + ATP = [HPr protein]-O-phospho-L-serine + ADP + H(+). It carries out the reaction [HPr protein]-O-phospho-L-serine + phosphate + H(+) = [HPr protein]-L-serine + diphosphate. Catalyzes the ATP- as well as the pyrophosphate-dependent phosphorylation of a specific serine residue in HPr, a phosphocarrier protein of the phosphoenolpyruvate-dependent sugar phosphotransferase system (PTS). HprK/P also catalyzes the pyrophosphate-producing, inorganic phosphate-dependent dephosphorylation (phosphorolysis) of seryl-phosphorylated HPr (P-Ser-HPr). The two antagonistic activities of HprK/P are regulated by several intracellular metabolites, which change their concentration in response to the absence or presence of rapidly metabolisable carbon sources (glucose, fructose, etc.) in the growth medium. Therefore, by controlling the phosphorylation state of HPr, HPrK/P is a sensor enzyme that plays a major role in the regulation of carbon metabolism and sugar transport: it mediates carbon catabolite repression (CCR), and regulates PTS-catalyzed carbohydrate uptake and inducer exclusion. This Streptococcus pneumoniae serotype 4 (strain ATCC BAA-334 / TIGR4) protein is HPr kinase/phosphorylase.